We begin with the raw amino-acid sequence, 418 residues long: 3-isopropylmalate dehydratase large subunit 1 (418 aa).

C298, C358, and C361 together coordinate [4Fe-4S] cluster.

This sequence belongs to the aconitase/IPM isomerase family. LeuC type 2 subfamily. In terms of assembly, heterodimer of LeuC and LeuD. Requires [4Fe-4S] cluster as cofactor.

The enzyme catalyses (2R,3S)-3-isopropylmalate = (2S)-2-isopropylmalate. The protein operates within amino-acid biosynthesis; L-leucine biosynthesis; L-leucine from 3-methyl-2-oxobutanoate: step 2/4. Functionally, catalyzes the isomerization between 2-isopropylmalate and 3-isopropylmalate, via the formation of 2-isopropylmaleate. This chain is 3-isopropylmalate dehydratase large subunit 1, found in Methanopyrus kandleri (strain AV19 / DSM 6324 / JCM 9639 / NBRC 100938).